Reading from the N-terminus, the 105-residue chain is Vacuolar ATPase assembly integral membrane protein VMA21 homolog (105 aa).

The interval 1 to 26 (MSTKNKKAAGGNGGAPKQTRQQSHDS) is disordered. Residues 1 to 36 (MSTKNKKAAGGNGGAPKQTRQQSHDSQDYSSFKTVL) lie on the Cytoplasmic side of the membrane. Residues 37–57 (FYCMLIVFLPVLTFFVLKGFV) traverse the membrane as a helical segment. The Lumenal segment spans residues 58 to 68 (LDQFLDISEVK). The helical transmembrane segment at 69–89 (VNIASAVGAVVALHIALGLYI) threads the bilayer. At 90-105 (YRAYFGAPGSKGSKTD) the chain is on the cytoplasmic side.

This sequence belongs to the VMA21 family.

Its subcellular location is the endoplasmic reticulum membrane. The protein resides in the endoplasmic reticulum-Golgi intermediate compartment membrane. The protein localises to the cytoplasmic vesicle. It is found in the COPII-coated vesicle membrane. Functionally, required for the assembly of the V0 complex of the vacuolar ATPase (V-ATPase) in the endoplasmic reticulum. The chain is Vacuolar ATPase assembly integral membrane protein VMA21 homolog from Drosophila simulans (Fruit fly).